Here is a 493-residue protein sequence, read N- to C-terminus: Transmembrane protein 184 homolog DDB_G0284525 (493 aa).

The span at 1–10 shows a compositional bias: polar residues; the sequence is MTQESSSSNH. Positions 1 to 25 are disordered; the sequence is MTQESSSSNHYVDESSFDNNNNNNN. A run of 7 helical transmembrane segments spans residues 46 to 66, 87 to 107, 119 to 139, 180 to 200, 212 to 232, 254 to 274, and 293 to 313; these read VPAL…ATIL, IVRI…SLLL, DCYE…YGGG, YVLV…FGLY, FYNA…VVLF, IVVF…NFGW, and FLIC…FPYE. 2 N-linked (GlcNAc...) asparagine glycosylation sites follow: Asn-415 and Asn-416.

Belongs to the TMEM184 family.

The protein resides in the cell membrane. Functionally, probable transporter. The chain is Transmembrane protein 184 homolog DDB_G0284525 (tmem184A) from Dictyostelium discoideum (Social amoeba).